Here is a 241-residue protein sequence, read N- to C-terminus: Homeobox protein TGIF2LX (241 aa).

Disordered regions lie at residues 1–58 and 126–209; these read MEAA…GNLP and TGKD…VSPE. Over residues 21-39 the composition is skewed to polar residues; the sequence is AKTQSPAQDTSIMSRNNAD. The homeobox; TALE-type DNA-binding region spans 48–111; that stretch reads EHKKKRKGNL…INARRRILPD (64 aa).

It belongs to the TALE/TGIF homeobox family.

Its subcellular location is the nucleus. May have a transcription role in testis. The sequence is that of Homeobox protein TGIF2LX (TGIF2LX) from Gorilla gorilla gorilla (Western lowland gorilla).